A 357-amino-acid polypeptide reads, in one-letter code: Snake venom metalloproteinase H4 (357 aa).

A signal peptide spans 1-6 (FPYQGS). Residues 7–176 (SIMLESGKVN…KKASQLIVST (170 aa)) constitute a propeptide that is removed on maturation. The 178-residue stretch at 180–357 (RYMEIVIVVD…EVIKYFLDSK (178 aa)) folds into the Peptidase M12B domain. His-316 serves as a coordination point for Zn(2+). Residue Glu-317 is part of the active site. Residues His-320 and His-326 each contribute to the Zn(2+) site. An intrachain disulfide couples Cys-333 to Cys-339.

Belongs to the venom metalloproteinase (M12B) family. P-I subfamily. Monomer. Requires Zn(2+) as cofactor. As to expression, expressed by the venom gland.

It is found in the secreted. Its function is as follows. Snake venom metalloproteinase that impairs hemostasis in the envenomed animal. The sequence is that of Snake venom metalloproteinase H4 from Deinagkistrodon acutus (Hundred-pace snake).